A 197-amino-acid polypeptide reads, in one-letter code: Elongation factor Ts (197 aa).

Residues T81–V84 form an involved in Mg(2+) ion dislocation from EF-Tu region.

The protein belongs to the EF-Ts family.

It is found in the cytoplasm. Its function is as follows. Associates with the EF-Tu.GDP complex and induces the exchange of GDP to GTP. It remains bound to the aminoacyl-tRNA.EF-Tu.GTP complex up to the GTP hydrolysis stage on the ribosome. The protein is Elongation factor Ts of Petrotoga mobilis (strain DSM 10674 / SJ95).